The following is a 185-amino-acid chain: Riboflavin kinase (185 aa).

Mg(2+)-binding residues include Thr41 and Asn43. The Nucleophile role is filled by Glu122.

Belongs to the flavokinase family. Requires Zn(2+) as cofactor. The cofactor is Mg(2+).

The enzyme catalyses riboflavin + ATP = FMN + ADP + H(+). It functions in the pathway cofactor biosynthesis; FMN biosynthesis; FMN from riboflavin (ATP route): step 1/1. Functionally, catalyzes the phosphorylation of riboflavin (vitamin B2) to form flavin mononucleotide (FMN) coenzyme. This is Riboflavin kinase (FMN1) from Kluyveromyces lactis (strain ATCC 8585 / CBS 2359 / DSM 70799 / NBRC 1267 / NRRL Y-1140 / WM37) (Yeast).